A 334-amino-acid chain; its full sequence is tRNA methyltransferase 10 homolog A (334 aa).

Disordered regions lie at residues 1–101 (MSLE…SRKR) and 290–334 (PLTE…EQNS). A compositionally biased stretch (polar residues) spans 26 to 40 (HAGNNTPLQENSSAP). A coiled-coil region spans residues 62-94 (KQWEDQRELRKQKRKEKRQKRKLERQAQAEHNI). Basic residues predominate over residues 71–84 (RKQKRKEKRQKRKL). Basic and acidic residues predominate over residues 85 to 98 (ERQAQAEHNIDANS). In terms of domain architecture, SAM-dependent MTase TRM10-type spans 98-289 (SRKRFRHEVQ…SVLPQRKGAI (192 aa)). A compositionally biased stretch (acidic residues) spans 305–317 (QEDGEDSDSDSSI).

Belongs to the class IV-like SAM-binding methyltransferase superfamily. TRM10 family.

It carries out the reaction guanosine(9) in tRNA + S-adenosyl-L-methionine = N(1)-methylguanosine(9) in tRNA + S-adenosyl-L-homocysteine + H(+). In terms of biological role, S-adenosyl-L-methionine-dependent guanine N(1)-methyltransferase that catalyzes the formation of N(1)-methylguanine at position 9 (m1G9) in tRNAs. Probably not able to catalyze formation of N(1)-methyladenine at position 9 (m1A9) in tRNAs. The polypeptide is tRNA methyltransferase 10 homolog A (trmt10a) (Xenopus tropicalis (Western clawed frog)).